A 323-amino-acid chain; its full sequence is ATP synthase gamma chain (323 aa).

Residues 206–240 (NPIVNLVGFGYKERGVKPINNRRATSDIVGESKSI) are insert.

Belongs to the ATPase gamma chain family. As to quaternary structure, F-type ATPases have 2 components, CF(1) - the catalytic core - and CF(0) - the membrane proton channel. CF(1) has five subunits: alpha(3), beta(3), gamma(1), delta(1), epsilon(1). CF(0) has three main subunits: a, b and c.

It localises to the cell inner membrane. Produces ATP from ADP in the presence of a proton gradient across the membrane. The gamma chain is believed to be important in regulating ATPase activity and the flow of protons through the CF(0) complex. In Rickettsia conorii (strain ATCC VR-613 / Malish 7), this protein is ATP synthase gamma chain.